The sequence spans 555 residues: Glutamate--tRNA ligase (555 aa).

The 'HIGH' region motif lies at 103–113 (PNPSGPLHIGH).

The protein belongs to the class-I aminoacyl-tRNA synthetase family. Glutamate--tRNA ligase type 2 subfamily.

The protein resides in the cytoplasm. The catalysed reaction is tRNA(Glu) + L-glutamate + ATP = L-glutamyl-tRNA(Glu) + AMP + diphosphate. Functionally, catalyzes the attachment of glutamate to tRNA(Glu) in a two-step reaction: glutamate is first activated by ATP to form Glu-AMP and then transferred to the acceptor end of tRNA(Glu). The polypeptide is Glutamate--tRNA ligase (Methanobrevibacter smithii (strain ATCC 35061 / DSM 861 / OCM 144 / PS)).